The sequence spans 734 residues: Photosystem I P700 chlorophyll a apoprotein A2 (734 aa).

8 helical membrane-spanning segments follow: residues 46–69 (IFASHFGQLAIIFLWTSGNLFHVA), 135–158 (LYTGAIFLLILSTISLIAGWLHLQ), 175–199 (LNHHLSGLFGVSSLAWTGHLVHVAI), 273–291 (IAHHHLAIAFIFLVAGHMY), 330–353 (IHFQLGLALASLGVITSLVAQHMY), 369–395 (AALYTHHQYIAGFIMTGAFAHGAIFFI), 417–439 (AIISHLSWASLFLGFHTLGLYVH), and 517–535 (FLVHHAIALGLHTTTLILV). The [4Fe-4S] cluster site is built by cysteine 559 and cysteine 568. 2 helical membrane passes run 575–596 (AFYLAVFWMLNTIGWVTFYWHW) and 643–665 (LSVWAWMFLFGHLVWATGFMFLI). Positions 654, 662, and 670 each coordinate chlorophyll a. Tryptophan 671 serves as a coordination point for phylloquinone. Residues 707–727 (LVGLAHFSVGYIFTYAAFLIA) form a helical membrane-spanning segment.

This sequence belongs to the PsaA/PsaB family. The PsaA/B heterodimer binds the P700 chlorophyll special pair and subsequent electron acceptors. PSI consists of a core antenna complex that captures photons, and an electron transfer chain that converts photonic excitation into a charge separation. The eukaryotic PSI reaction center is composed of at least 11 subunits. P700 is a chlorophyll a/chlorophyll a' dimer, A0 is one or more chlorophyll a, A1 is one or both phylloquinones and FX is a shared 4Fe-4S iron-sulfur center. is required as a cofactor.

It is found in the plastid. The protein resides in the chloroplast thylakoid membrane. It carries out the reaction reduced [plastocyanin] + hnu + oxidized [2Fe-2S]-[ferredoxin] = oxidized [plastocyanin] + reduced [2Fe-2S]-[ferredoxin]. PsaA and PsaB bind P700, the primary electron donor of photosystem I (PSI), as well as the electron acceptors A0, A1 and FX. PSI is a plastocyanin-ferredoxin oxidoreductase, converting photonic excitation into a charge separation, which transfers an electron from the donor P700 chlorophyll pair to the spectroscopically characterized acceptors A0, A1, FX, FA and FB in turn. Oxidized P700 is reduced on the lumenal side of the thylakoid membrane by plastocyanin. This chain is Photosystem I P700 chlorophyll a apoprotein A2, found in Phaseolus vulgaris (Kidney bean).